Reading from the N-terminus, the 663-residue chain is Bicarbonate transport ATP-binding protein CmpC (663 aa).

The 235-residue stretch at 5–239 folds into the ABC transporter domain; it reads VAVENIEKSF…RPRKRMDVVH (235 aa). Residue 42–49 coordinates ATP; the sequence is GHSGCGKS. The segment at 281-663 is cmpA-like; it reads LEIGYVPLMA…LDQPRPIAAA (383 aa).

It belongs to the ABC transporter superfamily. Nitrate/nitrite/cyanate uptake transporter (NitT) (TC 3.A.1.16) family. In terms of assembly, the complex is composed of two ATP-binding proteins (CmpC and CmpD), a transmembrane protein (CmpB) and a solute-binding protein (CmpA).

The protein resides in the cell inner membrane. Its function is as follows. Part of the ABC transporter complex CmpABCD involved in bicarbonate transport. Responsible for energy coupling to the transport system. This Synechococcus elongatus (strain ATCC 33912 / PCC 7942 / FACHB-805) (Anacystis nidulans R2) protein is Bicarbonate transport ATP-binding protein CmpC (cmpC).